The following is a 1589-amino-acid chain: Polyhomeotic-proximal chromatin protein (1589 aa).

The span at 1 to 15 (MDRRALKFMQKRADT) shows a compositional bias: basic and acidic residues. 5 disordered regions span residues 1–85 (MDRR…GGKQ), 107–174 (KYDV…NCNS), 252–290 (LQQQLSEANGGGAASAGAGGAASPANSQQSQQQQHSTAI), 1112–1244 (LSTA…STTT), and 1260–1294 (AVSTASTTTTSSGTFITSCTSTTTTTTSSISNGSK). Composition is skewed to low complexity over residues 18 to 28 (DTTTPVSTTAS), 60 to 80 (NHNNNNSSQHSHSHQQQQQQQ), and 119 to 139 (AQQQATSGTGPATGSGSVTPT). Over residues 154-174 (HTPSTPNRPSAPSTPNTNCNS) the composition is skewed to polar residues. A compositionally biased stretch (gly residues) spans 260 to 271 (NGGGAASAGAGG). Residues 272–285 (AASPANSQQSQQQQ) show a composition bias toward low complexity. At Ser1145 the chain carries Phosphoserine. A Phosphothreonine modification is found at Thr1148. Over residues 1157 to 1180 (TTPKSSTPATVSASVEASSSTGEA) the composition is skewed to low complexity. Residues 1189 to 1221 (RSSTPSKGATTPTSKQSNAAVQPPSSTTPNSVS) show a composition bias toward polar residues. Low complexity-rich tracts occupy residues 1230–1244 (TCGSLTSATSTSTTT) and 1260–1290 (AVSTASTTTTSSGTFITSCTSTTTTTTSSIS). Residues 1356–1389 (SAPGSDMVACEQCGKMEHKAKLKRKRYCSPGCSR) form an FCS-type zinc finger. Cys1365, Cys1368, Cys1383, and Cys1387 together coordinate Zn(2+). Positions 1513-1577 (WSVDDVSNFI…VAKVESIKEV (65 aa)) constitute an SAM domain.

In terms of assembly, component of PRC1 complex, which contains many PcG proteins like Pc, ph, Scm, Psc, Sce and also chromatin-remodeling proteins such as histone deacetylases. This complex is distinct from the Esc/E(z) complex, at least composed of esc, E(z), Su(z)12, HDAC1/Rpd3 and Caf1-55. The 2 complexes however cooperate and interact together during the first 3 hours of development to establish PcG silencing. Interacts with the SAM domain of Scm via its SAM domain in vitro. Interacts with Trl in vivo and with corto in vitro. As to expression, salivary glands.

Its subcellular location is the nucleus. Its function is as follows. Polycomb group (PcG) protein. PcG proteins act by forming multiprotein complexes, which are required to maintain the transcriptionally repressive state of homeotic genes throughout development. PcG proteins are not required to initiate repression, but to maintain it during later stages of development. Component of the PcG multiprotein PRC1 complex, a complex that acts via chromatin remodeling and modification of histones; it mediates monoubiquitination of histone H2A 'Lys-118', rendering chromatin heritably changed in its expressibility. Plays a role in regulating the expression of other pair-rule genes such as eve, ftz, and H. This is Polyhomeotic-proximal chromatin protein (ph-p) from Drosophila melanogaster (Fruit fly).